The chain runs to 201 residues: Small ribosomal subunit protein uS4 (201 aa).

A disordered region spans residues 26-46 (LARRAYAPGDHGRDRRGKLSE). Positions 35–44 (DHGRDRRGKL) are enriched in basic and acidic residues. One can recognise an S4 RNA-binding domain in the interval 93–156 (RRLDNMVYRL…KNLDIIKNAV (64 aa)).

The protein belongs to the universal ribosomal protein uS4 family. As to quaternary structure, part of the 30S ribosomal subunit. Contacts protein S5. The interaction surface between S4 and S5 is involved in control of translational fidelity.

In terms of biological role, one of the primary rRNA binding proteins, it binds directly to 16S rRNA where it nucleates assembly of the body of the 30S subunit. With S5 and S12 plays an important role in translational accuracy. This is Small ribosomal subunit protein uS4 from Limosilactobacillus reuteri (strain DSM 20016) (Lactobacillus reuteri).